We begin with the raw amino-acid sequence, 214 residues long: Adenylate kinase (214 aa).

10–15 (GAGKGT) lines the ATP pocket. Residues 30-59 (STGDMLRAAIKEGTPLGLEAKKVMDAGQLI) are NMP. Residues T31, R36, 57–59 (QLI), 85–88 (GFPR), and Q92 contribute to the AMP site. The tract at residues 122-159 (GRRVHPGSGRVYHVVYNPPKVADKDNETGEELIIRADD) is LID. ATP is bound by residues R123 and 132–133 (VY). Residues R156 and R167 each contribute to the AMP site. Q200 serves as a coordination point for ATP.

This sequence belongs to the adenylate kinase family. In terms of assembly, monomer.

It localises to the cytoplasm. It carries out the reaction AMP + ATP = 2 ADP. The protein operates within purine metabolism; AMP biosynthesis via salvage pathway; AMP from ADP: step 1/1. Its function is as follows. Catalyzes the reversible transfer of the terminal phosphate group between ATP and AMP. Plays an important role in cellular energy homeostasis and in adenine nucleotide metabolism. The chain is Adenylate kinase from Pseudoalteromonas translucida (strain TAC 125).